We begin with the raw amino-acid sequence, 257 residues long: Snake venom serine protease Dav-KN (257 aa).

The first 18 residues, 1-18 (MVLIRVLANLLILQLSYA), serve as a signal peptide directing secretion. A propeptide spanning residues 19–24 (QKSSEL) is cleaved from the precursor. The 224-residue stretch at 25 to 248 (VIGGDECNIN…HLDWIKGIIA (224 aa)) folds into the Peptidase S1 domain. 5 disulfides stabilise this stretch: C31–C162, C49–C65, C97–C255, C173–C188, and C199–C224. Residues H64 and D109 each act as charge relay system in the active site. Residue S203 is the Charge relay system of the active site.

This sequence belongs to the peptidase S1 family. Snake venom subfamily. As to quaternary structure, monomer. As to expression, expressed by the venom gland.

Its subcellular location is the secreted. Snake venom serine protease that may act in the hemostasis system of the prey. This chain is Snake venom serine protease Dav-KN, found in Deinagkistrodon acutus (Hundred-pace snake).